The following is a 154-amino-acid chain: MATRLCCQLDPSRDVLCLRPVGAESRGRPLSGPLGTLSSPSPSAVPADHGAHLSLRGLPVCAFSSAGPCALRFTSARCMETTVNAHQILPKVLHKRTLGLPAMSTTDLEAYFKDCVFKDWEELGEEIRLKVFVLGGCRHKLVCAPAPCNFFTSA.

Residues 68–117 (PCALRFTSARCMETTVNAHQILPKVLHKRTLGLPAMSTTDLEAYFKDCVF) form a mitochondrial targeting sequence region.

Belongs to the orthohepadnavirus protein X family. May form homodimer. May interact with host CEBPA, CFLAR, CREB1, DDB1, E4F1, HBXIP, HSPD1/HSP60, NFKBIA, POLR2E and SMAD4. Interacts with host SMC5-SMC6 complex and induces its degradation. Interacts with host TRPC4AP; leading to prevent ubiquitination of TRPC4AP. Interacts with host PLSCR1; this interaction promotes ubiquitination and degradation of HBx and impairs HBx-mediated cell proliferation. A fraction may be phosphorylated in insect cells and HepG2 cells, a human hepatoblastoma cell line. Phosphorylated in vitro by host protein kinase C or mitogen-activated protein kinase. N-acetylated in insect cells.

Its subcellular location is the host cytoplasm. The protein resides in the host nucleus. It is found in the host mitochondrion. Multifunctional protein that plays a role in silencing host antiviral defenses and promoting viral transcription. Does not seem to be essential for HBV infection. May be directly involved in development of cirrhosis and liver cancer (hepatocellular carcinoma). Most of cytosolic activities involve modulation of cytosolic calcium. The effect on apoptosis is controversial depending on the cell types in which the studies have been conducted. May induce apoptosis by localizing in mitochondria and causing loss of mitochondrial membrane potential. May also modulate apoptosis by binding host CFLAR, a key regulator of the death-inducing signaling complex (DISC). Promotes viral transcription by using the host E3 ubiquitin ligase DDB1 to target the SMC5-SMC6 complex to proteasomal degradation. This host complex would otherwise bind to viral episomal DNA, and prevents its transcription. Moderately stimulates transcription of many different viral and cellular transcription elements. Promoters and enhancers stimulated by HBx contain DNA binding sites for NF-kappa-B, AP-1, AP-2, c-EBP, ATF/CREB, or the calcium-activated factor NF-AT. This Homo sapiens (Human) protein is Protein X.